A 338-amino-acid polypeptide reads, in one-letter code: Anthranilate phosphoribosyltransferase (338 aa).

5-phospho-alpha-D-ribose 1-diphosphate-binding positions include Gly-81, 84–85 (GD), Thr-89, 91–94 (NIST), 109–117 (KHGNRNLSS), and Ala-121. Gly-81 provides a ligand contact to anthranilate. Residue Ser-93 participates in Mg(2+) binding. Asn-112 is a binding site for anthranilate. Arg-167 serves as a coordination point for anthranilate. Mg(2+) contacts are provided by Asp-226 and Glu-227.

Belongs to the anthranilate phosphoribosyltransferase family. Homodimer. The cofactor is Mg(2+).

The enzyme catalyses N-(5-phospho-beta-D-ribosyl)anthranilate + diphosphate = 5-phospho-alpha-D-ribose 1-diphosphate + anthranilate. It participates in amino-acid biosynthesis; L-tryptophan biosynthesis; L-tryptophan from chorismate: step 2/5. Its function is as follows. Catalyzes the transfer of the phosphoribosyl group of 5-phosphorylribose-1-pyrophosphate (PRPP) to anthranilate to yield N-(5'-phosphoribosyl)-anthranilate (PRA). The polypeptide is Anthranilate phosphoribosyltransferase (Cereibacter sphaeroides (strain ATCC 17025 / ATH 2.4.3) (Rhodobacter sphaeroides)).